The sequence spans 314 residues: Synaptophysin (314 aa).

The Cytoplasmic portion of the chain corresponds to 1-25 (MLLLADMDVVNQLVAGGQFRVVKEP). In terms of domain architecture, MARVEL spans 21-228 (VVKEPLGFVK…NLWFVFKETG (208 aa)). Residues 26–49 (LGFVKVLQWVFAIFAFATCGSYTG) form a helical membrane-spanning segment. At 50–107 (ELRLSVECANKTESALNIEVEFEYPFRLHQVYFDAPSCVKGGTTKIFLVGDYSSSAEF) the chain is on the vesicular side. An N-linked (GlcNAc...) asparagine glycan is attached at asparagine 59. Position 81 is a phosphotyrosine (tyrosine 81). A helical membrane pass occupies residues 108–131 (FVTVAVFAFLYSMGALATYIFLQN). Residues 132–138 (KYRENNK) are Cytoplasmic-facing. The helical transmembrane segment at 139–162 (GPMMDFLATAVFAFMWLVSSSAWA) threads the bilayer. The Vesicular portion of the chain corresponds to 163–200 (KGLSDVKMATDPENIIKEMPMCRQTGNTCKELRDPVTS). Residues 201–224 (GLNTSVVFGFLNLVLWVGNLWFVF) form a helical membrane-spanning segment. Residues 225–314 (KETGWAAPFM…GAPTSFSNQM (90 aa)) lie on the Cytoplasmic side of the membrane. Threonine 227 carries the phosphothreonine modification. The segment at 239 to 314 (GAPEKQPAPG…GAPTSFSNQM (76 aa)) is disordered. A compositionally biased stretch (gly residues) spans 254 to 264 (AGYGQGPGGYG). Residues 255-305 (GYGQGPGGYGPQDSYGPQGGYQPDYGQPASGGGGGYGPQGDYGQQGYGQQG) are repeats, Gly-rich. The segment covering 265–282 (PQDSYGPQGGYQPDYGQP) has biased composition (low complexity). Phosphotyrosine occurs at positions 279 and 296. Gly residues predominate over residues 283-303 (ASGGGGGYGPQGDYGQQGYGQ).

Belongs to the synaptophysin/synaptobrevin family. Homohexamer or homotetramer. Interacts with SRCIN1. Interacts with VAMP2; the interaction is inhibited by interaction of VAPM2 with SEPT8. Ubiquitinated; mediated by SIAH1 or SIAH2 and leading to its subsequent proteasomal degradation. In terms of processing, phosphorylated by SRC.

It is found in the cytoplasmic vesicle. The protein localises to the secretory vesicle. The protein resides in the synaptic vesicle membrane. It localises to the synapse. Its subcellular location is the synaptosome. Functionally, possibly involved in structural functions as organizing other membrane components or in targeting the vesicles to the plasma membrane. Involved in the regulation of short-term and long-term synaptic plasticity. In Mus musculus (Mouse), this protein is Synaptophysin (Syp).